We begin with the raw amino-acid sequence, 547 residues long: Chaperonin GroEL (547 aa).

ATP-binding positions include threonine 30–proline 33, lysine 51, aspartate 87–threonine 91, glycine 415, asparagine 479–alanine 481, and aspartate 495. A disordered region spans residues proline 525–methionine 547. The span at alanine 532–methionine 547 shows a compositional bias: gly residues.

It belongs to the chaperonin (HSP60) family. As to quaternary structure, forms a cylinder of 14 subunits composed of two heptameric rings stacked back-to-back. Interacts with the co-chaperonin GroES.

It localises to the cytoplasm. The catalysed reaction is ATP + H2O + a folded polypeptide = ADP + phosphate + an unfolded polypeptide.. Its function is as follows. Together with its co-chaperonin GroES, plays an essential role in assisting protein folding. The GroEL-GroES system forms a nano-cage that allows encapsulation of the non-native substrate proteins and provides a physical environment optimized to promote and accelerate protein folding. The polypeptide is Chaperonin GroEL (Nitrosomonas europaea (strain ATCC 19718 / CIP 103999 / KCTC 2705 / NBRC 14298)).